A 658-amino-acid polypeptide reads, in one-letter code: NADH-ubiquinone oxidoreductase chain 5 (658 aa).

17 helical membrane-spanning segments follow: residues 4–23, 30–52, 81–103, 112–129, 133–155, 168–190, 200–222, 243–262, 272–294, 301–319, 329–351, 364–386, 409–431, 452–471, 505–527, 607–629, and 639–656; these read TLIVLPLLGSISSGFFGRKI, IITCSSVILTTLLALLAFIEVGI, LTVSMLIPVLIVSSLVHIYSISY, RFFSYLSLFTFMMIILVT, YLLMFVGWEGVGICSYLLINFWF, LLTNRVGDCFLTIGIFAMLWSFG, LAPYYNENIITMIGICLVIGATA, VSALIHAATMVTAGVYLLMR, TVLIICLWLGAITTVFSSLIGLF, VIAYSTMSQLGMMVIGIGL, LVNHAFYKALLFLGAGAVIHSVA, PFLPLTYSVMLIASLSLVAVPFM, IVYFIATIGAMFTTLYSAKVLYL, LFLNIPLIILAVFSIFFGFL, VPVLFKLLPFFFTISLSILSILY, LSTGVVTTYALYILMGLMFYIST, and LLILIIFSLFVILNNKLL.

This sequence belongs to the complex I subunit 5 family.

The protein localises to the mitochondrion inner membrane. It carries out the reaction a ubiquinone + NADH + 5 H(+)(in) = a ubiquinol + NAD(+) + 4 H(+)(out). Its function is as follows. Core subunit of the mitochondrial membrane respiratory chain NADH dehydrogenase (Complex I) that is believed to belong to the minimal assembly required for catalysis. Complex I functions in the transfer of electrons from NADH to the respiratory chain. The immediate electron acceptor for the enzyme is believed to be ubiquinone. The protein is NADH-ubiquinone oxidoreductase chain 5 (nad5) of Talaromyces marneffei (Penicillium marneffei).